Reading from the N-terminus, the 550-residue chain is Hydroxylamine reductase (550 aa).

[2Fe-2S] cluster contacts are provided by C3, C6, C18, and C25. Positions 249, 273, 317, 405, 433, 458, 492, and 494 each coordinate hybrid [4Fe-2O-2S] cluster. C405 carries the post-translational modification Cysteine persulfide.

The protein belongs to the HCP family. Requires [2Fe-2S] cluster as cofactor. The cofactor is hybrid [4Fe-2O-2S] cluster.

Its subcellular location is the cytoplasm. It carries out the reaction A + NH4(+) + H2O = hydroxylamine + AH2 + H(+). In terms of biological role, catalyzes the reduction of hydroxylamine to form NH(3) and H(2)O. In Shigella flexneri serotype 5b (strain 8401), this protein is Hydroxylamine reductase.